A 311-amino-acid chain; its full sequence is Fluoride export protein 1 (311 aa).

The Cytoplasmic segment spans residues 1–6 (MLLTQS). A helical membrane pass occupies residues 7-25 (YFCIMSMLGTLARLGLTAL). At 26 to 29 (NTYP) the chain is on the extracellular side. The chain crosses the membrane as a helical span at residues 30–50 (GAPFSGLLWVQFVGCVIMGFC). Residues 51-65 (QTESVFFPRPKHNAT) are Cytoplasmic-facing. The helical transmembrane segment at 66–86 (FLLAITTGFCGSLTTFSSWML) threads the bilayer. Residues 87 to 106 (QMFTGMANLDPFERRGRGYS) are Extracellular-facing. A helical transmembrane segment spans residues 107–127 (FLSVVSDFMVTMCIAMSSLIW). Topologically, residues 128–154 (GKQIGKTTGQWRIGKVAFAWPIPAHTH) are cytoplasmic. Residues 155-175 (IVVRVLLLLLSICFFVGAAFY) form a helical membrane-spanning segment. The Extracellular portion of the chain corresponds to 176-186 (TAYTTNVTHRG). Asparagine 181 carries N-linked (GlcNAc...) asparagine glycosylation. Residues 187–207 (IGFSLIFSPFAALTRLYLARF) traverse the membrane as a helical segment. Over 208–212 (LNSPQ) the chain is Cytoplasmic. Residues 213-233 (YFIPYGTLCANVFATLLLSIM) traverse the membrane as a helical segment. At 234 to 250 (YMIPQITHCTPVSRSVM) the chain is on the extracellular side. Residues 251–268 (YGIQNGFCAVLSTLSTFS) traverse the membrane as a helical segment. At 269–278 (NELHTMPIKR) the chain is on the cytoplasmic side. The helical transmembrane segment at 279–299 (AYIYCIISVAISFSICVIVDG) threads the bilayer. Over 300–311 (ATAWGHGYTEKY) the chain is Extracellular.

The protein belongs to the fluoride channel Fluc/FEX (TC 1.A.43) family.

It is found in the cell membrane. It carries out the reaction fluoride(in) = fluoride(out). Fluoride channel required for the rapid expulsion of cytoplasmic fluoride. The protein is Fluoride export protein 1 (fex1) of Schizosaccharomyces pombe (strain 972 / ATCC 24843) (Fission yeast).